Here is a 233-residue protein sequence, read N- to C-terminus: NAD-dependent protein deacylase (233 aa).

Positions 1–230 (MKNIMILSGA…ALDIENFMKD (230 aa)) constitute a Deacetylase sirtuin-type domain. 9 to 28 (GAGLSAPSGLKTFRDNDGLW) contacts NAD(+). Residues Y53 and R56 each coordinate substrate. NAD(+) is bound at residue 88-91 (QNVD). The Proton acceptor role is filled by H106. Residues C114, C117, C133, and C136 each contribute to the Zn(2+) site. NAD(+) contacts are provided by residues 172 to 174 (GTS) and 200 to 202 (NLE).

This sequence belongs to the sirtuin family. Class III subfamily. Zn(2+) serves as cofactor.

Its subcellular location is the cytoplasm. The catalysed reaction is N(6)-acetyl-L-lysyl-[protein] + NAD(+) + H2O = 2''-O-acetyl-ADP-D-ribose + nicotinamide + L-lysyl-[protein]. It catalyses the reaction N(6)-succinyl-L-lysyl-[protein] + NAD(+) + H2O = 2''-O-succinyl-ADP-D-ribose + nicotinamide + L-lysyl-[protein]. Its function is as follows. NAD-dependent lysine deacetylase and desuccinylase that specifically removes acetyl and succinyl groups on target proteins. Modulates the activities of several proteins which are inactive in their acylated form. The sequence is that of NAD-dependent protein deacylase from Campylobacter jejuni subsp. jejuni serotype O:2 (strain ATCC 700819 / NCTC 11168).